We begin with the raw amino-acid sequence, 254 residues long: Decaprenylphosphoryl-2-keto-beta-D-erythro-pentose reductase (254 aa).

Residue Asp67 participates in NAD(+) binding. Tyr160 acts as the Proton acceptor in catalysis. Lys164 contacts NAD(+).

This sequence belongs to the short-chain dehydrogenases/reductases (SDR) family. Interacts with DprE1 to form an epimerase complex.

Its subcellular location is the periplasm. The catalysed reaction is trans,octa-cis-decaprenylphospho-beta-D-arabinofuranose + NAD(+) = trans,octa-cis-decaprenylphospho-beta-D-erythro-pentofuranosid-2-ulose + NADH + H(+). It functions in the pathway cell wall biogenesis; cell wall polysaccharide biosynthesis. Component of the DprE1-DprE2 complex that catalyzes the 2-step epimerization of decaprenyl-phospho-ribose (DPR) to decaprenyl-phospho-arabinose (DPA), a key precursor that serves as the arabinose donor required for the synthesis of cell-wall arabinans. DprE1 catalyzes the first step of epimerization, namely FAD-dependent oxidation of the C2' hydroxyl of DPR to yield the keto intermediate decaprenyl-phospho-2'-keto-D-arabinose (DPX). The intermediate DPX is then transferred to DprE2 subunit of the epimerase complex, most probably through a 'substrate channel' at the interface of DprE1-DprE2 complex. DprE2 then catalyzes the second step of epimerization, the NAD(+)-dependent reduction of DPX that leads to the formation of DPA. The protein is Decaprenylphosphoryl-2-keto-beta-D-erythro-pentose reductase of Mycobacterium bovis (strain ATCC BAA-935 / AF2122/97).